The sequence spans 284 residues: Putative ribosome biogenesis protein C306.07c (284 aa).

The tract at residues 264–284 (LKKSELRAQKRGSSGEGKGNK) is disordered.

It belongs to the universal ribosomal protein uL1 family. Highly divergent. Component of the 90S pre-ribosomes.

The protein localises to the nucleus. It localises to the nucleolus. Functionally, involved in rRNA-processing and ribosome biosynthesis. The chain is Putative ribosome biogenesis protein C306.07c from Schizosaccharomyces pombe (strain 972 / ATCC 24843) (Fission yeast).